Here is a 198-residue protein sequence, read N- to C-terminus: Probable GTP-binding protein EngB (198 aa).

The EngB-type G domain occupies 22 to 195 (GHPEIAFLGR…WSWLEQTAGL (174 aa)). Residues 30–37 (GRSNVGKS), 57–61 (GKTQT), 75–78 (DVPG), 142–145 (TKID), and 174–176 (FSA) each bind GTP. The Mg(2+) site is built by serine 37 and threonine 59.

This sequence belongs to the TRAFAC class TrmE-Era-EngA-EngB-Septin-like GTPase superfamily. EngB GTPase family. Mg(2+) serves as cofactor.

Necessary for normal cell division and for the maintenance of normal septation. The protein is Probable GTP-binding protein EngB of Lacticaseibacillus paracasei (strain ATCC 334 / BCRC 17002 / CCUG 31169 / CIP 107868 / KCTC 3260 / NRRL B-441) (Lactobacillus paracasei).